Here is an 877-residue protein sequence, read N- to C-terminus: MDKLSSKIRAEFLGFFKNSGCAVVPSDSLIPAGDKTLLFTSAGMVQFKQHFLGQSKDSFTRATSCQKCFRTSDIDQVGTTARHLTFFEMLGNFSFGDYFKKEAAAWAWEFLTKNMSLPKDKLYITIYKDDDEVAGIWKNIAPANKIIKMDEKTNFWNMGETGPCGPCSEILIDLGQETGCGSPACCPECNCDRYLEIWNLVFTQFDKQPDGSLKNLPRKNIDTGMGLERLSATVNGRKNVFDTDLFMPVMENAAEILKIKNEGSNISKLRMIADHSRAITFLISDGILPSNEGRGYVLRRILRRALRQGKFYGYNKPYINELVSDVLKIMEGAYPELSSKLSNIRSIVKTEEEKFLETLESGSEILSSLINSYKSKDINIISGKDVFKLYDTYGFPHDLTKEMAFENGLEIDEDKFKFEQKKAQEKSRVAWCGSGERDITFYSILRKKTGDTVFTGYDNYASESRVLALIKDGSEISELKTGDNGEIILSHSSFYAQSGGQSDDKGKIANNSFESIVEYIFKPAGNLFVHKVKVLKGLIKINDAVSTIIDIERRKQIARHHTAAHLLHKALREAFGGHITQAGSLVARDYFRFDFTHFSALKKDDLIKIEKRVNSIIRLNSEVCIETMAIAKARNAGAMALFGEKYGDEVRTVLIKNESGDGNYSMELCGGTHVSRTGDIGIFKIISESSAAAGVRRIEAVAGIAAENYILDEEAVIIKTSKILNASKEELVNKAHKYTSDYKKLENEFKSLKSSLISGEIDSYAKEVKKINGINFLSVIADKADIKALRTISDQLKEKLKSAVLLIVSKNEDRASFILSATADCVQKGINAGKIAKAFAASINGSAGGKPDFAQGGSKDLSNLNDAVKNAHKYILL.

Zn(2+) is bound by residues His-561, His-565, Cys-669, and His-673.

Belongs to the class-II aminoacyl-tRNA synthetase family. Zn(2+) is required as a cofactor.

Its subcellular location is the cytoplasm. It catalyses the reaction tRNA(Ala) + L-alanine + ATP = L-alanyl-tRNA(Ala) + AMP + diphosphate. Catalyzes the attachment of alanine to tRNA(Ala) in a two-step reaction: alanine is first activated by ATP to form Ala-AMP and then transferred to the acceptor end of tRNA(Ala). Also edits incorrectly charged Ser-tRNA(Ala) and Gly-tRNA(Ala) via its editing domain. The protein is Alanine--tRNA ligase of Endomicrobium trichonymphae.